The sequence spans 647 residues: 1-deoxy-D-xylulose-5-phosphate synthase (647 aa).

Thiamine diphosphate-binding positions include His-88 and 129 to 131; that span reads GHA. Residue Asp-160 coordinates Mg(2+). Residues 161–162, Asn-189, Tyr-300, and Glu-377 contribute to the thiamine diphosphate site; that span reads GA. Asn-189 provides a ligand contact to Mg(2+).

It belongs to the transketolase family. DXPS subfamily. As to quaternary structure, homodimer. Mg(2+) is required as a cofactor. It depends on thiamine diphosphate as a cofactor.

The enzyme catalyses D-glyceraldehyde 3-phosphate + pyruvate + H(+) = 1-deoxy-D-xylulose 5-phosphate + CO2. The protein operates within metabolic intermediate biosynthesis; 1-deoxy-D-xylulose 5-phosphate biosynthesis; 1-deoxy-D-xylulose 5-phosphate from D-glyceraldehyde 3-phosphate and pyruvate: step 1/1. In terms of biological role, catalyzes the acyloin condensation reaction between C atoms 2 and 3 of pyruvate and glyceraldehyde 3-phosphate to yield 1-deoxy-D-xylulose-5-phosphate (DXP). The chain is 1-deoxy-D-xylulose-5-phosphate synthase from Dehalococcoides mccartyi (strain ATCC BAA-2266 / KCTC 15142 / 195) (Dehalococcoides ethenogenes (strain 195)).